The sequence spans 285 residues: Nucleotide-binding protein PFLU_0879 (285 aa).

8–15 (GRSGSGKS) lines the ATP pocket. 60–63 (DARN) contacts GTP.

This sequence belongs to the RapZ-like family.

Functionally, displays ATPase and GTPase activities. The chain is Nucleotide-binding protein PFLU_0879 from Pseudomonas fluorescens (strain SBW25).